The following is a 46-amino-acid chain: Escargot/snail protein homolog (46 aa).

3 C2H2-type zinc fingers span residues Ile-1–His-4, Cys-8–His-30, and Phe-36–Ala-46.

This sequence belongs to the snail C2H2-type zinc-finger protein family.

Its subcellular location is the nucleus. This is Escargot/snail protein homolog from Oryzias latipes (Japanese rice fish).